The following is an 89-amino-acid chain: Small ribosomal subunit protein uS15 (89 aa).

The span at 1–21 (MVLDPTQKKSVIDAHAKHEGD) shows a compositional bias: basic and acidic residues. The disordered stretch occupies residues 1–24 (MVLDPTQKKSVIDAHAKHEGDTGS).

Belongs to the universal ribosomal protein uS15 family. As to quaternary structure, part of the 30S ribosomal subunit. Forms a bridge to the 50S subunit in the 70S ribosome, contacting the 23S rRNA.

Its function is as follows. One of the primary rRNA binding proteins, it binds directly to 16S rRNA where it helps nucleate assembly of the platform of the 30S subunit by binding and bridging several RNA helices of the 16S rRNA. Functionally, forms an intersubunit bridge (bridge B4) with the 23S rRNA of the 50S subunit in the ribosome. This chain is Small ribosomal subunit protein uS15, found in Desulfovibrio desulfuricans (strain ATCC 27774 / DSM 6949 / MB).